The sequence spans 69 residues: DNA-directed RNA polymerase subunit omega (69 aa).

Belongs to the RNA polymerase subunit omega family. As to quaternary structure, the RNAP catalytic core consists of 2 alpha, 1 beta, 1 beta' and 1 omega subunit. When a sigma factor is associated with the core the holoenzyme is formed, which can initiate transcription.

It carries out the reaction RNA(n) + a ribonucleoside 5'-triphosphate = RNA(n+1) + diphosphate. In terms of biological role, promotes RNA polymerase assembly. Latches the N- and C-terminal regions of the beta' subunit thereby facilitating its interaction with the beta and alpha subunits. The protein is DNA-directed RNA polymerase subunit omega of Geobacter metallireducens (strain ATCC 53774 / DSM 7210 / GS-15).